The sequence spans 79 residues: Acyl carrier protein (79 aa).

One can recognise a Carrier domain in the interval 2–77 (SDIADKVKKI…DAIDYIEKQK (76 aa)). O-(pantetheine 4'-phosphoryl)serine is present on serine 37.

Belongs to the acyl carrier protein (ACP) family. Post-translationally, 4'-phosphopantetheine is transferred from CoA to a specific serine of apo-ACP by AcpS. This modification is essential for activity because fatty acids are bound in thioester linkage to the sulfhydryl of the prosthetic group.

Its subcellular location is the cytoplasm. It participates in lipid metabolism; fatty acid biosynthesis. In terms of biological role, carrier of the growing fatty acid chain in fatty acid biosynthesis. This is Acyl carrier protein from Gluconobacter oxydans (strain 621H) (Gluconobacter suboxydans).